A 236-amino-acid chain; its full sequence is Small ribosomal subunit protein uS2c (236 aa).

It belongs to the universal ribosomal protein uS2 family.

The protein resides in the plastid. It is found in the chloroplast. The chain is Small ribosomal subunit protein uS2c (rps2) from Cucumis sativus (Cucumber).